A 738-amino-acid chain; its full sequence is MTDAPFDRADIDALLDARHPDPFACLGPHRVGDATVVRTLLPGALRVRAIAAGGGVLGELRQVDPAGCFAGALPDGRERGERPRYRLSIDWPDARQDVEDAYAFGTLLDEDALARFAAGDPRAALACLGARALDMDGVPGVRFAVWAPGASRVSVVGDFNGWDARRHPMRLRRPWGVWELFVPRIGAGERYKFALRARDGAALPLKADPCACRTEAPPRTASIVADLDALERFGWHDDAWLRARASLDLAHAPVSIYEVHPESWLRVAAEGNRSATWDELAQRLIPYAAGMGFSHVELTPIAEYPFGGSWGYQSLSPFAPSARFGPPEGFARFVEHAHAAGLGVIVDWVPAHFPDDPHGLGKFDGTALFEHADPREGWHPDWHTHVFNVGRREVGAFLIASALAWAHRYHVDGIRVDAVASMLYRDYSRAAGEWVPNVYGGRENLESIAFLKHFNDTLHGPAAPPGVATFAEESTAWPGVTAPTAEHGLGFDFKWNMGWMHDTLAYLREDPIHRRHHHDRLTFGLVYAFSERFVLPLSHDEVVHGKGSLAAKMPGDAWQRLANLRAYFGFMWAHPGKKLLFMGGEFAQWGEFAHDATPQWDLLDAPAHRGVQRLVRDLNRLHAAEPALHALDDRPAGFAWLVGDDRNNSVFAFVRRDDAGRMLVAVCNFTPVPRTDYRLGLPAPGRWAEVLNTDGAAYGGTDAGNGGALQADEIPAHGERWSAALRLPPLATLWLRPA.

D417 functions as the Nucleophile in the catalytic mechanism. The active-site Proton donor is the E472.

It belongs to the glycosyl hydrolase 13 family. GlgB subfamily. As to quaternary structure, monomer.

The catalysed reaction is Transfers a segment of a (1-&gt;4)-alpha-D-glucan chain to a primary hydroxy group in a similar glucan chain.. It participates in glycan biosynthesis; glycogen biosynthesis. Its function is as follows. Catalyzes the formation of the alpha-1,6-glucosidic linkages in glycogen by scission of a 1,4-alpha-linked oligosaccharide from growing alpha-1,4-glucan chains and the subsequent attachment of the oligosaccharide to the alpha-1,6 position. This Burkholderia pseudomallei (strain 1106a) protein is 1,4-alpha-glucan branching enzyme GlgB.